The chain runs to 752 residues: Catalase-peroxidase (752 aa).

A disordered region spans residues 1-21; it reads MSNESKCPFHQTAGGGTTNRD. A cross-link (tryptophyl-tyrosyl-methioninium (Trp-Tyr) (with M-271)) is located at residues 91–245; it reads WHSAGTYRIG…LAAVQMGLIY (155 aa). Histidine 92 functions as the Proton acceptor in the catalytic mechanism. Positions 204-228 are disordered; that stretch reads QAPGQGDLVAEPAKHGEEQNRDLSA. Basic and acidic residues predominate over residues 215-228; the sequence is PAKHGEEQNRDLSA. A cross-link (tryptophyl-tyrosyl-methioninium (Tyr-Met) (with W-91)) is located at residues 245 to 271; sequence YVNPEGPEGNPDPVASGKDIRETFGRM. Residue histidine 286 coordinates heme. Positions 366–391 are disordered; sequence AHQWQPKEGKGAGTVPDAHDPSKRHA.

The protein belongs to the peroxidase family. Peroxidase/catalase subfamily. As to quaternary structure, homodimer or homotetramer. The cofactor is heme b. In terms of processing, formation of the three residue Trp-Tyr-Met cross-link is important for the catalase, but not the peroxidase activity of the enzyme.

It catalyses the reaction H2O2 + AH2 = A + 2 H2O. The enzyme catalyses 2 H2O2 = O2 + 2 H2O. Its function is as follows. Bifunctional enzyme with both catalase and broad-spectrum peroxidase activity. This is Catalase-peroxidase from Pseudomonas putida (strain W619).